The primary structure comprises 424 residues: Histidine--tRNA ligase (424 aa).

The protein belongs to the class-II aminoacyl-tRNA synthetase family. In terms of assembly, homodimer.

It localises to the cytoplasm. It carries out the reaction tRNA(His) + L-histidine + ATP = L-histidyl-tRNA(His) + AMP + diphosphate + H(+). This Salmonella typhi protein is Histidine--tRNA ligase.